The sequence spans 592 residues: Glutathione-regulated potassium-efflux system protein KefB (592 aa).

The next 13 helical transmembrane spans lie at 4–24 (SDFL…VPLA), 29–49 (IGAV…GLGF), 55–75 (EILH…GLEL), 87–107 (IFGV…GLLM), 115–135 (AAVV…LQLM), 152–172 (VLLF…LLAG), 177–197 (HFDW…LIGG), 207–227 (FIAA…LVLG), 230–250 (LFMD…GVLL), 268–288 (GLLL…GVLY), 291–311 (LLWV…VLYL), 324–344 (MQFA…FSTA), and 356–376 (ALLL…MKLV). The RCK N-terminal domain maps to 400–519 (KPQVIVVGFG…AGVTQFSRET (120 aa)).

This sequence belongs to the monovalent cation:proton antiporter 2 (CPA2) transporter (TC 2.A.37) family. KefB subfamily. In terms of assembly, interacts with the regulatory subunit KefG.

Its subcellular location is the cell inner membrane. Its function is as follows. Pore-forming subunit of a potassium efflux system that confers protection against electrophiles. Catalyzes K(+)/H(+) antiport. The polypeptide is Glutathione-regulated potassium-efflux system protein KefB (Escherichia coli O157:H7).